We begin with the raw amino-acid sequence, 157 residues long: Endoribonuclease YbeY (157 aa).

Residues histidine 114, histidine 118, and histidine 124 each coordinate Zn(2+).

It belongs to the endoribonuclease YbeY family. It depends on Zn(2+) as a cofactor.

Its subcellular location is the cytoplasm. Single strand-specific metallo-endoribonuclease involved in late-stage 70S ribosome quality control and in maturation of the 3' terminus of the 16S rRNA. In Serratia proteamaculans (strain 568), this protein is Endoribonuclease YbeY.